The primary structure comprises 477 residues: Aspartyl/glutamyl-tRNA(Asn/Gln) amidotransferase subunit B (477 aa).

It belongs to the GatB/GatE family. GatB subfamily. As to quaternary structure, heterotrimer of A, B and C subunits.

It catalyses the reaction L-glutamyl-tRNA(Gln) + L-glutamine + ATP + H2O = L-glutaminyl-tRNA(Gln) + L-glutamate + ADP + phosphate + H(+). The enzyme catalyses L-aspartyl-tRNA(Asn) + L-glutamine + ATP + H2O = L-asparaginyl-tRNA(Asn) + L-glutamate + ADP + phosphate + 2 H(+). Its function is as follows. Allows the formation of correctly charged Asn-tRNA(Asn) or Gln-tRNA(Gln) through the transamidation of misacylated Asp-tRNA(Asn) or Glu-tRNA(Gln) in organisms which lack either or both of asparaginyl-tRNA or glutaminyl-tRNA synthetases. The reaction takes place in the presence of glutamine and ATP through an activated phospho-Asp-tRNA(Asn) or phospho-Glu-tRNA(Gln). This chain is Aspartyl/glutamyl-tRNA(Asn/Gln) amidotransferase subunit B, found in Bdellovibrio bacteriovorus (strain ATCC 15356 / DSM 50701 / NCIMB 9529 / HD100).